We begin with the raw amino-acid sequence, 323 residues long: Fructose-1,6-bisphosphatase class 1 (323 aa).

Mg(2+)-binding residues include glutamate 88, aspartate 107, leucine 109, and aspartate 110. Residues 110 to 113 and asparagine 200 contribute to the substrate site; that span reads DGSS. Position 272 (glutamate 272) interacts with Mg(2+).

This sequence belongs to the FBPase class 1 family. In terms of assembly, homotetramer. The cofactor is Mg(2+).

It localises to the cytoplasm. It catalyses the reaction beta-D-fructose 1,6-bisphosphate + H2O = beta-D-fructose 6-phosphate + phosphate. It participates in carbohydrate biosynthesis; gluconeogenesis. The chain is Fructose-1,6-bisphosphatase class 1 from Acinetobacter baumannii (strain ACICU).